The chain runs to 243 residues: Tegument protein UL14 homolog (243 aa).

It belongs to the alphaherpesvirinae HHV-1 UL14 protein family. In terms of processing, phosphorylated.

The protein localises to the virion tegument. Its subcellular location is the host cytoplasm. The protein resides in the host nucleus. Its function is as follows. Contributes to the nuclear transport of the viral transcriptional activator VP16 homolog during the early phase of infection. Therefore, participates indirectly in the regulation of the immediate-early gene expression. Additionally, seems to be important for efficient nuclear targeting of capsids. This chain is Tegument protein UL14 homolog (MDV026), found in Gallid herpesvirus 2 (strain Chicken/Md5/ATCC VR-987) (GaHV-2).